Consider the following 224-residue polypeptide: Protein-L-isoaspartate O-methyltransferase (224 aa).

Ser-70 is a catalytic residue.

Belongs to the methyltransferase superfamily. L-isoaspartyl/D-aspartyl protein methyltransferase family.

It is found in the cytoplasm. It catalyses the reaction [protein]-L-isoaspartate + S-adenosyl-L-methionine = [protein]-L-isoaspartate alpha-methyl ester + S-adenosyl-L-homocysteine. Functionally, catalyzes the methyl esterification of L-isoaspartyl residues in peptides and proteins that result from spontaneous decomposition of normal L-aspartyl and L-asparaginyl residues. It plays a role in the repair and/or degradation of damaged proteins. The polypeptide is Protein-L-isoaspartate O-methyltransferase (Cellvibrio japonicus (strain Ueda107) (Pseudomonas fluorescens subsp. cellulosa)).